The primary structure comprises 600 residues: Glutamine--fructose-6-phosphate aminotransferase [isomerizing] (600 aa).

Catalysis depends on Cys-2, which acts as the Nucleophile; for GATase activity. Positions 2 to 217 constitute a Glutamine amidotransferase type-2 domain; the sequence is CGIVGYIGYQ…DGELVIVTSE (216 aa). SIS domains lie at 283 to 422 and 452 to 590; these read IINE…AKGF and IASD…VDKP. Lys-595 acts as the For Fru-6P isomerization activity in catalysis.

As to quaternary structure, homodimer.

Its subcellular location is the cytoplasm. It carries out the reaction D-fructose 6-phosphate + L-glutamine = D-glucosamine 6-phosphate + L-glutamate. Catalyzes the first step in hexosamine metabolism, converting fructose-6P into glucosamine-6P using glutamine as a nitrogen source. The sequence is that of Glutamine--fructose-6-phosphate aminotransferase [isomerizing] from Geobacillus kaustophilus (strain HTA426).